The chain runs to 332 residues: tRNA (cytosine(38)-C(5))-methyltransferase (332 aa).

The region spanning 3-332 is the SAM-dependent MTase C5-type domain; sequence HKILELYSGI…ISELLKILFE (330 aa). Residues 12-14, 33-34, 55-56, and serine 75 contribute to the S-adenosyl-L-homocysteine site; these read IGG, DI, and NI. Residue cysteine 78 is part of the active site. S-adenosyl-L-homocysteine-binding positions include glutamine 79, serine 97, and 316 to 317; that span reads NS.

Belongs to the class I-like SAM-binding methyltransferase superfamily. C5-methyltransferase family.

It localises to the cytoplasm. Its subcellular location is the nucleus. The enzyme catalyses cytidine(38) in tRNA + S-adenosyl-L-methionine = 5-methylcytidine(38) in tRNA + S-adenosyl-L-homocysteine + H(+). The catalysed reaction is a 2'-deoxycytidine in DNA + S-adenosyl-L-methionine = a 5-methyl-2'-deoxycytidine in DNA + S-adenosyl-L-homocysteine + H(+). Specifically methylates cytosine 38 in the anticodon loop of tRNA(Asp). Also has DNA (cytosine-5)-methyltransferase activity. Shows affinity for both tRNA(Asp) and DNA substrates. This is tRNA (cytosine(38)-C(5))-methyltransferase from Spodoptera frugiperda (Fall armyworm).